Reading from the N-terminus, the 324-residue chain is MSIYDDIFKQFPTIDEWSESNEKIMLEPYTHLGINTAKELPSMVTKAFNHWYQVPQPALDIILQIVGPIHAACLLIDDIQDDSDLRGGNPVAHKVYGVAQTINTATYVCFDAYHKISKLTPFSKSPETTDLWSIINDEIAALHRGQWIDLYWRDSLICPTEEEYLRMIHNKTGAIFRLPIKLLQALSPVDSPPDCFPLVNVVGILVQIRNDLLSLSPDFTKDKGFCEDFSEGKFSFPIIHSVKADSSNSLLIDILRLRPKDEPTKRKALRYMKDQTKSLDHTFDVLCKLEKTAKEELEKLGGNSELSSILELIQVSPIPEIADR.

2 residues coordinate Mg(2+): D77 and D81.

Belongs to the FPP/GGPP synthase family. Mg(2+) serves as cofactor.

It carries out the reaction (2E)-geranyl diphosphate = (E)-beta-ocimene + diphosphate. It catalyses the reaction (2E,6E)-farnesyl diphosphate = (3E,6E)-alpha-farnesene + diphosphate. The catalysed reaction is (2E,6E,10E)-geranylgeranyl diphosphate = (E,E,E)-alpha-springene + diphosphate. Functionally, terpene synthase that shows monoterpene synthase activity and produces (E)-beta-ocimene as a major product, using geranyl diphosphate (GPP) as substrate. Also shows sesquiterpene synthase activity as it is able to convert farnesyl diphosphate (FPP) into (E,E)-alpha-farnesene. Finally, TPS2 can convert geranylgeranyl diphosphate into (E,E,E)-alpha-springene. This chain is IDS-like terpene synthase 2, found in Melampsora lini (Rust fungus).